The sequence spans 889 residues: DNA mismatch repair protein MutS (889 aa).

Residue 622-629 coordinates ATP; that stretch reads GPNMAGKS. Positions 869–889 are disordered; the sequence is QRVKRPEKAPADVTAETEDQE.

It belongs to the DNA mismatch repair MutS family.

Its function is as follows. This protein is involved in the repair of mismatches in DNA. It is possible that it carries out the mismatch recognition step. This protein has a weak ATPase activity. The sequence is that of DNA mismatch repair protein MutS from Desulfatibacillum aliphaticivorans.